Here is a 148-residue protein sequence, read N- to C-terminus: MSIIDNRKAFFDYHIEERYEAGLVLEGWEVKALRAGRGQIKEGYVVVKHAEIFLIGTHISPLPEASTHIKPDPVRTRKLLLHRDEIKKLIGKVEQRGYTLVPLNFHYKGGRVKCEIGLAKGKKLHDKRETEKKRDWEREKARIMRSAT.

A disordered region spans residues 123–148; it reads KLHDKRETEKKRDWEREKARIMRSAT. A compositionally biased stretch (basic and acidic residues) spans 126–142; that stretch reads DKRETEKKRDWEREKAR.

Belongs to the SmpB family.

Its subcellular location is the cytoplasm. Functionally, required for rescue of stalled ribosomes mediated by trans-translation. Binds to transfer-messenger RNA (tmRNA), required for stable association of tmRNA with ribosomes. tmRNA and SmpB together mimic tRNA shape, replacing the anticodon stem-loop with SmpB. tmRNA is encoded by the ssrA gene; the 2 termini fold to resemble tRNA(Ala) and it encodes a 'tag peptide', a short internal open reading frame. During trans-translation Ala-aminoacylated tmRNA acts like a tRNA, entering the A-site of stalled ribosomes, displacing the stalled mRNA. The ribosome then switches to translate the ORF on the tmRNA; the nascent peptide is terminated with the 'tag peptide' encoded by the tmRNA and targeted for degradation. The ribosome is freed to recommence translation, which seems to be the essential function of trans-translation. The polypeptide is SsrA-binding protein (Burkholderia pseudomallei (strain 1710b)).